Reading from the N-terminus, the 214-residue chain is NADH-quinone oxidoreductase subunit C (214 aa).

This sequence belongs to the complex I 30 kDa subunit family. NDH-1 is composed of 14 different subunits. Subunits NuoB, C, D, E, F, and G constitute the peripheral sector of the complex.

The protein localises to the cell inner membrane. It catalyses the reaction a quinone + NADH + 5 H(+)(in) = a quinol + NAD(+) + 4 H(+)(out). Functionally, NDH-1 shuttles electrons from NADH, via FMN and iron-sulfur (Fe-S) centers, to quinones in the respiratory chain. The immediate electron acceptor for the enzyme in this species is believed to be ubiquinone. Couples the redox reaction to proton translocation (for every two electrons transferred, four hydrogen ions are translocated across the cytoplasmic membrane), and thus conserves the redox energy in a proton gradient. The chain is NADH-quinone oxidoreductase subunit C from Francisella tularensis subsp. novicida (strain U112).